We begin with the raw amino-acid sequence, 201 residues long: 3-isopropylmalate dehydratase small subunit (201 aa).

Belongs to the LeuD family. LeuD type 1 subfamily. As to quaternary structure, heterodimer of LeuC and LeuD.

It catalyses the reaction (2R,3S)-3-isopropylmalate = (2S)-2-isopropylmalate. The protein operates within amino-acid biosynthesis; L-leucine biosynthesis; L-leucine from 3-methyl-2-oxobutanoate: step 2/4. Catalyzes the isomerization between 2-isopropylmalate and 3-isopropylmalate, via the formation of 2-isopropylmaleate. The chain is 3-isopropylmalate dehydratase small subunit from Cereibacter sphaeroides (strain ATCC 17029 / ATH 2.4.9) (Rhodobacter sphaeroides).